A 397-amino-acid polypeptide reads, in one-letter code: LIM/homeobox protein Lhx9 (397 aa).

2 LIM zinc-binding domains span residues 69–130 (ALCA…RFSV) and 131–193 (QRCA…LLQG). 3 disordered regions span residues 248–272 (ENEA…RMRT), 330–364 (ENGG…TLTD), and 378–397 (SNMD…TNLF). Positions 267–326 (TKRMRTSFKHHQLRTMKSYFAINHNPDAKDLKQLAQKTGLTKRVLQVWFQNARAKFRRNL) form a DNA-binding region, homeobox. The segment covering 353–364 (LTPPGTATTLTD) has biased composition (low complexity).

Interacts with LDB1 and LDB2.

Its subcellular location is the nucleus. Involved in gonadal development. The protein is LIM/homeobox protein Lhx9 (LHX9) of Homo sapiens (Human).